A 348-amino-acid polypeptide reads, in one-letter code: MSDLSKRDQHVLEAVVTDYIHTGEPVGSRTISKRYGVNVSSATIRNVMADLEEMGFLHQPHTSAGRIPTERGLRFYLDSIMQFKALEEREREMIREAFRNELPDVKELLRRTSRVLSRFCRQAGVVLWPKLTLTLFKRIEFIRLRAHQIMVLLVSKTGLVHHTLVEWEQDIGQEELDKYSRYLNDLLEDMPLGEVKQRVLEEMRDEKVLFDQLYSRALKITDRVFQQNLESSDVYIEGRTNLLNNPEFADVDRMRRILDAFEDKSRIIRLLDRTLRNSTGVQIILGTENDLQELNEISLISSPYRRGDTLLGVMGVIGPLRMDYSRIIPVVEFTADLLSQLLEEPGED.

This sequence belongs to the HrcA family.

In terms of biological role, negative regulator of class I heat shock genes (grpE-dnaK-dnaJ and groELS operons). Prevents heat-shock induction of these operons. In Syntrophobacter fumaroxidans (strain DSM 10017 / MPOB), this protein is Heat-inducible transcription repressor HrcA.